The primary structure comprises 535 residues: 2-(3-amino-3-carboxypropyl)histidine synthase subunit 2 (535 aa).

[4Fe-4S] cluster-binding residues include Cys107, Cys128, and Cys342. Residues 390-401 (NDKPEDASKESE) are compositionally biased toward basic and acidic residues. 2 disordered regions span residues 390-471 (NDKP…QQND) and 512-535 (ASTL…SGRH). Acidic residues predominate over residues 404–424 (VAEEEVEFEDVAGGVEGEESA). Polar residues predominate over residues 449 to 471 (NPSTTAETEANSDGQPTSTQQND).

Belongs to the DPH1/DPH2 family. DPH2 subfamily. In terms of assembly, component of the 2-(3-amino-3-carboxypropyl)histidine synthase complex composed of DPH1, DPH2, DPH3 and a NADH-dependent reductase, predominantly CBR1. It depends on [4Fe-4S] cluster as a cofactor.

It is found in the cytoplasm. Its pathway is protein modification; peptidyl-diphthamide biosynthesis. Functionally, required for the first step of diphthamide biosynthesis, a post-translational modification of histidine which occurs in elongation factor 2. DPH1 and DPH2 transfer a 3-amino-3-carboxypropyl (ACP) group from S-adenosyl-L-methionine (SAM) to a histidine residue, the reaction is assisted by a reduction system comprising DPH3 and a NADH-dependent reductase, predominantly CBR1. Facilitates the reduction of the catalytic iron-sulfur cluster found in the DPH1 subunit. This chain is 2-(3-amino-3-carboxypropyl)histidine synthase subunit 2 (DPH2), found in Gibberella zeae (strain ATCC MYA-4620 / CBS 123657 / FGSC 9075 / NRRL 31084 / PH-1) (Wheat head blight fungus).